The primary structure comprises 143 residues: Deoxyuridine 5'-triphosphate nucleotidohydrolase (143 aa).

Substrate-binding positions include 63 to 65 (RSG), Asn-76, 80 to 82 (TID), and Lys-90.

It belongs to the dUTPase family. Requires Mg(2+) as cofactor.

The enzyme catalyses dUTP + H2O = dUMP + diphosphate + H(+). Its pathway is pyrimidine metabolism; dUMP biosynthesis; dUMP from dCTP (dUTP route): step 2/2. This enzyme is involved in nucleotide metabolism: it produces dUMP, the immediate precursor of thymidine nucleotides and it decreases the intracellular concentration of dUTP so that uracil cannot be incorporated into DNA. The chain is Deoxyuridine 5'-triphosphate nucleotidohydrolase from Clostridioides difficile (Peptoclostridium difficile).